The chain runs to 431 residues: Glutamate-1-semialdehyde 2,1-aminomutase (431 aa).

Residue K267 is modified to N6-(pyridoxal phosphate)lysine.

The protein belongs to the class-III pyridoxal-phosphate-dependent aminotransferase family. HemL subfamily. As to quaternary structure, homodimer. Requires pyridoxal 5'-phosphate as cofactor.

It is found in the cytoplasm. The catalysed reaction is (S)-4-amino-5-oxopentanoate = 5-aminolevulinate. It functions in the pathway porphyrin-containing compound metabolism; protoporphyrin-IX biosynthesis; 5-aminolevulinate from L-glutamyl-tRNA(Glu): step 2/2. This Myxococcus xanthus (strain DK1622) protein is Glutamate-1-semialdehyde 2,1-aminomutase.